Reading from the N-terminus, the 262-residue chain is Nurim (262 aa).

Over 1 to 4 the chain is Nuclear; the sequence is MAPA. A helical transmembrane segment spans residues 5–28; the sequence is LLLVPAALASFILAFGTGVEFVRF. The Perinuclear space segment spans residues 29-58; the sequence is TSLRPLLGGIPESGGPDARHGWLAALQDRS. A helical membrane pass occupies residues 59–80; sequence ILASLAWDLCLLLLFVVQHSLM. At 81 to 97 the chain is on the nuclear side; sequence ATEAVKAWTSRYFGVLQ. Residues 98-114 form a helical membrane-spanning segment; the sequence is RSLYVACTALALQLVMR. Residues 115–133 lie on the Perinuclear space side of the membrane; sequence YWETTPRGPVLWEARAEPW. Residues 134–164 form a helical membrane-spanning segment; sequence ATWVPLLCFVLHVVSWLLIFSILLVFDYAEL. The Nuclear segment spans residues 165 to 191; sequence MGLKQVYYHVLGLGEPLSLKSPRALRL. Residues 192 to 210 traverse the membrane as a helical segment; that stretch reads FSHLRHPVCVELLTVLWVV. Residues 211 to 216 lie on the Perinuclear space side of the membrane; the sequence is PTLGTD. A helical transmembrane segment spans residues 217–234; sequence RLLLALLFTLYLGLAHGL. Residues 235 to 262 are Nuclear-facing; that stretch reads DQQDLRYLRSQLQRKLHLLSRPQDGEAE.

Belongs to the nurim family.

Its subcellular location is the nucleus inner membrane. The polypeptide is Nurim (Nrm) (Mus musculus (Mouse)).